We begin with the raw amino-acid sequence, 213 residues long: Motile sperm domain-containing protein 1 (213 aa).

The 128-residue stretch at 16–143 (PVFVFPTELI…KEHLTESVFF (128 aa)) folds into the MSP domain. The next 2 helical transmembrane spans lie at 159 to 179 (SLLT…PTLG) and 191 to 211 (LSVN…MAIL). The Nuclear export signal motif lies at 205-208 (LITM).

It localises to the endoplasmic reticulum membrane. It is found in the golgi apparatus membrane. Plays a role in differentiation and/or proliferation of mesenchymal stem cells. Proposed to be involved in epithelial-to-mesenchymal transition (EMT). However, another study suggests that it is not required for EMT or stem cell self-renewal and acts during later stages of differentiation. The sequence is that of Motile sperm domain-containing protein 1 (Mospd1) from Rattus norvegicus (Rat).